The chain runs to 207 residues: 3-hexulose-6-phosphate synthase (207 aa).

The protein belongs to the HPS/KGPDC family. HPS subfamily.

The catalysed reaction is D-ribulose 5-phosphate + formaldehyde = D-arabino-hex-3-ulose 6-phosphate. Its pathway is one-carbon metabolism; formaldehyde assimilation via RuMP pathway; D-fructose 6-phosphate from D-ribulose 5-phosphate and formaldehyde: step 1/2. In terms of biological role, catalyzes the condensation of ribulose 5-phosphate with formaldehyde to form 3-hexulose 6-phosphate. The protein is 3-hexulose-6-phosphate synthase (rmpA) of Mycobacterium gastri.